Here is a 120-residue protein sequence, read N- to C-terminus: Small ribosomal subunit protein bS16 (120 aa).

The segment at 81 to 120 (GLAKRPTRNNPQKAEPGEKAKERAAKRAEKAAAPAEDAAA) is disordered. Residues 95 to 110 (EPGEKAKERAAKRAEK) are compositionally biased toward basic and acidic residues. Low complexity predominate over residues 111–120 (AAAPAEDAAA).

Belongs to the bacterial ribosomal protein bS16 family.

This chain is Small ribosomal subunit protein bS16, found in Methylorubrum extorquens (strain CM4 / NCIMB 13688) (Methylobacterium extorquens).